The following is a 509-amino-acid chain: Carboxysome shell carbonic anhydrase (509 aa).

Cys170 is a binding site for Zn(2+). Asp172 acts as the Proton acceptor in catalysis. Residues His238 and Cys249 each coordinate Zn(2+).

Belongs to the beta-class carbonic anhydrase family. CsoSCA subfamily. In terms of assembly, homodimer. It depends on Zn(2+) as a cofactor.

Its subcellular location is the carboxysome. It carries out the reaction hydrogencarbonate + H(+) = CO2 + H2O. In terms of biological role, reversible hydration of carbon dioxide. Essential for photosynthetic carbon dioxide fixation, supplies CO(2) to RuBisCO (ribulose bisphosphate carboxylase, cbbL-cbbS) in the carboxysome. There are estimated to be 29 CsoSCA oligomers per carboxysome. In Prochlorococcus marinus subsp. pastoris (strain CCMP1986 / NIES-2087 / MED4), this protein is Carboxysome shell carbonic anhydrase.